A 1256-amino-acid polypeptide reads, in one-letter code: MQLKIMPKKKHLSAGGVPLILFLCQMISALDVPLDLVQPPTITQQSPKDYIIDPRENIVIQCEAKGKPPPSFSWTRNGTHFDIDKDPLVTMKPGSGTLVINIMSEGKAETYEGVYQCTARNERGAAVSNNIVVRPSRSPLWTKERLEPIVLQNGQSLVLPCRPPIGLPPAIIFWMDNSFQRLPQSERVSQGLNGDLYFSNVLPEDTREDYICYARFNHTQTIQQKQPISLKVISVDELNDTIAANLSDTEFYGAKSSKERPPTFLTPEGNESHKEELRGNVLSLECIAEGLPTPIIYWIKEDGMLPANRTFYRNFKKTLQITHVSEADSGNYQCIAKNALGAVHHTISVTVKAAPYWIVAPQNLVLSPGENGTLICRANGNPKPRISWLTNGVPIEIALDDPSRKIDGDTIIFSNVQESSSAVYQCNASNKYGYLLANAFVNVLAEPPRILTSANTLYQVIANRPALLDCAFFGSPMPTIEWFKGTKGSALHEDIYVLHDNGTLEIPVAQKDSTGTYTCVARNKLGMAKNEVHLEIKDPTRIIKQPEYAVVQRGSKVSFECRVKHDHTLIPTIMWLKDNGELPNDERFSTDKDHLVVSDVKDDDGGTYTCTANTTLDSASASAVLRVVAPTPTPAPIYDVPNPPFDLELTNQLDKSVQLTWTPGDDNNSPITKFIIEYEDAMHDAGLWRHQAEVSGTQTTAQLKLSPYVNYSFRVMAENSIGRSMPSEASEQYLTKAAEPDQNPMAVEGLGTEPDNLVITWKPLNGFQSNGPGLQYKVSWRQKDGDDEWTSVVVANVSKYIVSGTPTFVPYLIKVQALNDVGFAPEPAAVMGHSGEDLPMVAPGNVRVSVVNSTLAEVHWDPVPPKSVRGHLQGYRIYYWKTQSSSKRNRRHIEKKILTFQGTKTHGMLPGLQPYSHYALNVRVVNGKGEGPASTDRGFHTPEGVPSAPSSLKIVNPTLDSLTLEWDPPSHPNGILTEYILQYQPINSTHELGPLVDLKIPANKTRWTLKNLNFSTRYKFYFYAQTSVGPGSQITEEAITTVDEAGIPPPDVGAGKGKEEWRKEIVNGSRSFFGLKGLMPGTAYKVRVGAEGDSGFVSSEDVFETGPAMASRQVDIATQGWFIGLMCAVALLILILLIVCFIRRNKGGKYPVKEKEDAHADPEIQPMKEDDGTFGEYSDAEDHKPLKKGSRTPSDRTVKKEDSDDSLVDYGEGVNGQFNEDGSFIGQYSGKKEKEPAEGNESSEAPSPVNAMNSFV.

The N-terminal stretch at 1–29 is a signal peptide; that stretch reads MQLKIMPKKKHLSAGGVPLILFLCQMISA. The Extracellular segment spans residues 30–1119; that stretch reads LDVPLDLVQP…ASRQVDIATQ (1090 aa). 2 consecutive Ig-like C2-type domains span residues 40-128 and 135-229; these read PTIT…AAVS and PSRS…QPIS. 2 disulfide bridges follow: C62-C117 and C161-C212. N-linked (GlcNAc...) asparagine glycosylation occurs at N77. 6 N-linked (GlcNAc...) asparagine glycosylation sites follow: N217, N239, N245, N270, N308, and N371. Ig-like C2-type domains are found at residues 261–350, 355–442, 448–535, and 539–626; these read PPTF…ISVT, PYWI…AFVN, PRIL…VHLE, and PTRI…AVLR. C286 and C334 are oxidised to a cystine. An intrachain disulfide couples C376 to C426. N-linked (GlcNAc...) asparagine glycosylation is found at N427 and N501. Cystine bridges form between C470–C519 and C561–C610. N613, N710, N796, N852, N987, N1003, N1013, and N1067 each carry an N-linked (GlcNAc...) asparagine glycan. Fibronectin type-III domains follow at residues 643–738, 740–837, 842–944, and 948–1045; these read PPFD…TKAA, PDQN…SGED, APGN…TPEG, and APSS…VDEA. A helical membrane pass occupies residues 1120–1142; sequence GWFIGLMCAVALLILILLIVCFI. Over 1143-1256 the chain is Cytoplasmic; it reads RRNKGGKYPV…SPVNAMNSFV (114 aa). Residues 1151–1171 show a composition bias toward basic and acidic residues; that stretch reads PVKEKEDAHADPEIQPMKEDD. Positions 1151 to 1256 are disordered; it reads PVKEKEDAHA…SPVNAMNSFV (106 aa). A Phosphothreonine modification is found at T1173. Residue Y1177 is modified to Phosphotyrosine. S1178 carries the phosphoserine modification. The span at 1193 to 1202 shows a compositional bias: basic and acidic residues; sequence PSDRTVKKED. Phosphoserine occurs at positions 1203, 1206, 1223, 1242, 1243, and 1247. The span at 1240-1256 shows a compositional bias: polar residues; that stretch reads NESSEAPSPVNAMNSFV.

Belongs to the immunoglobulin superfamily. L1/neurofascin/NgCAM family. Constituent of a NFASC/NRCAM/ankyrin-G complex. Detected in a complex with CNTN1 and PTPRB. Interacts with GLDN/gliomedin and MYOC. As to expression, detected in sciatic nerve. Detected in brain, especially in the cerebellum Purkinje cell layer, inner granule cell layer and molecular layer (at protein level). Detected in neurons and Schwann cells.

It is found in the cell membrane. It localises to the cell projection. The protein resides in the axon. Its subcellular location is the secreted. In terms of biological role, cell adhesion protein that is required for normal responses to cell-cell contacts in brain and in the peripheral nervous system. Plays a role in neurite outgrowth in response to contactin binding. Plays a role in mediating cell-cell contacts between Schwann cells and axons. Plays a role in the formation and maintenance of the nodes of Ranvier on myelinated axons. Nodes of Ranvier contain clustered sodium channels that are crucial for the saltatory propagation of action potentials along myelinated axons. During development, nodes of Ranvier are formed by the fusion of two heminodes. Required for normal clustering of sodium channels at heminodes; not required for the formation of mature nodes with normal sodium channel clusters. Required, together with GLDN, for maintaining NFASC and sodium channel clusters at mature nodes of Ranvier. This Mus musculus (Mouse) protein is Neuronal cell adhesion molecule (Nrcam).